The following is a 435-amino-acid chain: Palmitoyltransferase pfa4 (435 aa).

Over 1–10 (MLCSSFSVSR) the chain is Cytoplasmic. Residues 11–31 (LAIPAVCILIAFLAYTSQIFF) traverse the membrane as a helical segment. Topologically, residues 32 to 48 (LYFEDAPLKEDEVWRIN) are lumenal. A helical transmembrane segment spans residues 49 to 69 (ILAICIWICYYRACTVDPGHV). At 70–129 (PKGWMPSDRERLKADRASGRQRWCRRCEAYKPPRAHHCKTCERCVPKMDHHCPWTSNCVS) the chain is on the cytoplasmic side. The region spanning 91 to 141 (RWCRRCEAYKPPRAHHCKTCERCVPKMDHHCPWTSNCVSHFTFPHFARFLF) is the DHHC domain. Cysteine 121 serves as the catalytic S-palmitoyl cysteine intermediate. A helical transmembrane segment spans residues 130 to 150 (HFTFPHFARFLFYAVVGIAYL). The Lumenal segment spans residues 151–179 (ETRLWQRVSKVWGSRHLPSYLGPSMGQIG). Residues 180-200 (HLFVLFVTNSLTLFALSLLLL) form a helical membrane-spanning segment. At 201–435 (RTLWSLGSNT…QRAKRQHLSQ (235 aa)) the chain is on the cytoplasmic side. Residues 359 to 368 (RKPFHVRLEE) show a composition bias toward basic and acidic residues. A disordered region spans residues 359–408 (RKPFHVRLEEYSNGSSDAEADTGSDDDSDHGEEGWKNSEGERLRDFGVDE). Residues 376–388 (AEADTGSDDDSDH) show a composition bias toward acidic residues. Residues 389 to 405 (GEEGWKNSEGERLRDFG) are compositionally biased toward basic and acidic residues.

This sequence belongs to the DHHC palmitoyltransferase family. PFA4 subfamily.

It is found in the endoplasmic reticulum membrane. The catalysed reaction is L-cysteinyl-[protein] + hexadecanoyl-CoA = S-hexadecanoyl-L-cysteinyl-[protein] + CoA. Its function is as follows. Mediates the reversible addition of palmitate to target proteins, thereby regulating their membrane association and biological function. This chain is Palmitoyltransferase pfa4, found in Emericella nidulans (strain FGSC A4 / ATCC 38163 / CBS 112.46 / NRRL 194 / M139) (Aspergillus nidulans).